We begin with the raw amino-acid sequence, 190 residues long: Nascent polypeptide-associated complex subunit alpha (190 aa).

Disordered regions lie at residues 20 to 42 (FDSDDAGADVHASDKVASRAERK) and 123 to 155 (SLQNSSASGAEKKVEEEEEDDDSPIDEEGVDAK). Over residues 30–40 (HASDKVASRAE) the composition is skewed to basic and acidic residues. An NAC-A/B domain is found at 37–102 (SRAERKSRKA…AKAEDMSQLA (66 aa)). The span at 138-151 (EEEEDDDSPIDEEG) shows a compositional bias: acidic residues. The UBA domain maps to 152–189 (VDAKDIDLVMQQVSCSRRKAVKALKESNGDLINAIMNA).

This sequence belongs to the NAC-alpha family. In terms of assembly, part of the nascent polypeptide-associated complex (NAC), consisting of EGD2 and EGD1. NAC associates with ribosomes via EGD1.

The protein localises to the cytoplasm. It is found in the nucleus. Component of the nascent polypeptide-associated complex (NAC), a dynamic component of the ribosomal exit tunnel, protecting the emerging polypeptides from interaction with other cytoplasmic proteins to ensure appropriate nascent protein targeting. The NAC complex also promotes mitochondrial protein import by enhancing productive ribosome interactions with the outer mitochondrial membrane and blocks the inappropriate interaction of ribosomes translating non-secretory nascent polypeptides with translocation sites in the membrane of the endoplasmic reticulum. EGD2 may also be involved in transcription regulation. In Mycosarcoma maydis (Corn smut fungus), this protein is Nascent polypeptide-associated complex subunit alpha (EGD2).